We begin with the raw amino-acid sequence, 399 residues long: MGSMAQKSVLMLCGEFMEAYETIVPLYVLQAFGVSVHCVSPGRKTGDKCVMAAHDLLGLEIYTELVVDHLTLNANFDGVIPDQYDAIIIPGGRFTELLSADEKCVSLVARFAELKKLIFTSCHSQLFLAAAGLLTGGMKCTAFESMKPFIELSGGAWWQQPGVQTLFEITDCVKDGSFMSTMGWPTLGHSLKVLLESLGSKISSSKENHQTSLLFLIGDCVEDYSINVPFKAFQALGCKVDAVTPTKKRGEKCATIVHDLEDGRQLPTEKFGHNFYVTVAWDDVSVDDYDCIVVPGGRSPELLVMNPKAVELVRKFVEKGKFVAAIGMGNWLLAATGALKKKRCASSYGTKVAVKVAGGEIVESERCVTDDKLVTAASTSDLPAFLYALSTALGLSVVF.

2 consecutive PfpI endopeptidase domains span residues 7–199 (KSVL…ESLG) and 211–394 (TSLL…TALG).

Belongs to the peptidase C56 family. Homotrimer.

Its function is as follows. May be involved in oxidative stress response. The polypeptide is DJ-1 protein homolog F (DJ1F) (Arabidopsis thaliana (Mouse-ear cress)).